Reading from the N-terminus, the 410-residue chain is Peptidase T (410 aa).

Residue H79 coordinates Zn(2+). D81 is a catalytic residue. D142 contributes to the Zn(2+) binding site. The active-site Proton acceptor is the E176. 3 residues coordinate Zn(2+): E177, D199, and H381.

This sequence belongs to the peptidase M20B family. Zn(2+) serves as cofactor.

The protein localises to the cytoplasm. It carries out the reaction Release of the N-terminal residue from a tripeptide.. Cleaves the N-terminal amino acid of tripeptides. The polypeptide is Peptidase T (Bacillus cereus (strain G9842)).